Here is a 472-residue protein sequence, read N- to C-terminus: Nuclear receptor subfamily 0 group B member 1 (472 aa).

A run of 3 repeats spans residues M1–C67, F68–C135, and F136–Y202. The 4 X 67 AA tandem repeats stretch occupies residues M1–V255. Short sequence motifs (LXXLL motif) lie at residues L13–L17, L80–L84, and L148–L152. One can recognise an NR LBD domain in the interval Q190 to K471. One copy of the 4; truncated repeat lies at V203 to V255. The span at V214 to E231 shows a compositional bias: polar residues. 2 disordered regions span residues V214–W238 and T324–Q343. Positions M463–L468 match the AF-2 motif motif.

Belongs to the nuclear hormone receptor family. NR0 subfamily. As to quaternary structure, homodimer. Interacts with NR5A1, NR5A2, NR0B2 and with COPS2. Interacts with ESRRB; represses ESRRB activity at the GATA6 promoter. Expressed in adult cerebral cortex, spinal cord, thymus, heart, lung, ovary, testis, adrenal gland, hypothalamus, spleen and kidney.

The protein resides in the nucleus. The protein localises to the cytoplasm. Nuclear receptor that lacks a DNA-binding domain and acts as a corepressor that inhibits the transcriptional activity of other nuclear receptors through heterodimeric interactions. Component of a cascade required for the development of the hypothalamic-pituitary-adrenal-gonadal axis. May also have a role in the development of the embryo and in the maintenance of embryonic stem cell pluripotency. This Mus musculus (Mouse) protein is Nuclear receptor subfamily 0 group B member 1 (Nr0b1).